Here is a 164-residue protein sequence, read N- to C-terminus: Transcriptional repressor NrdR (164 aa).

A zinc finger spans residues cysteine 3 to cysteine 34. Residues leucine 49–glutamate 139 form the ATP-cone domain.

It belongs to the NrdR family. It depends on Zn(2+) as a cofactor.

Functionally, negatively regulates transcription of bacterial ribonucleotide reductase nrd genes and operons by binding to NrdR-boxes. In Streptococcus pyogenes serotype M6 (strain ATCC BAA-946 / MGAS10394), this protein is Transcriptional repressor NrdR.